Reading from the N-terminus, the 374-residue chain is DNA-directed RNA polymerase subunit alpha (374 aa).

Residues 1-270 (MIFDEDSSSV…DQFQQFINFD (270 aa)) are alpha N-terminal domain (alpha-NTD). Positions 282 to 374 (KDVLPYDSNL…ESLSKQYSEE (93 aa)) are alpha C-terminal domain (alpha-CTD).

The protein belongs to the RNA polymerase alpha chain family. As to quaternary structure, homodimer. The RNAP catalytic core consists of 2 alpha, 1 beta, 1 beta' and 1 omega subunit. When a sigma factor is associated with the core the holoenzyme is formed, which can initiate transcription.

It carries out the reaction RNA(n) + a ribonucleoside 5'-triphosphate = RNA(n+1) + diphosphate. DNA-dependent RNA polymerase catalyzes the transcription of DNA into RNA using the four ribonucleoside triphosphates as substrates. In Ehrlichia ruminantium (strain Welgevonden), this protein is DNA-directed RNA polymerase subunit alpha.